The chain runs to 847 residues: Leucine--tRNA ligase (847 aa).

Positions 41–51 (PYPSGRIHMGH) match the 'HIGH' region motif. The 'KMSKS' region signature appears at 619 to 623 (KMSKS). Lys622 is a binding site for ATP.

It belongs to the class-I aminoacyl-tRNA synthetase family.

The protein resides in the cytoplasm. The enzyme catalyses tRNA(Leu) + L-leucine + ATP = L-leucyl-tRNA(Leu) + AMP + diphosphate. The sequence is that of Leucine--tRNA ligase from Cereibacter sphaeroides (strain ATCC 17029 / ATH 2.4.9) (Rhodobacter sphaeroides).